We begin with the raw amino-acid sequence, 344 residues long: L-threonine 3-dehydrogenase (344 aa).

Cys42 provides a ligand contact to Zn(2+). Catalysis depends on charge relay system residues Thr44 and His47. Positions 67, 68, 97, 100, 103, and 111 each coordinate Zn(2+). Residues Ile179, Asp199, Arg204, 266 to 268, and 290 to 291 contribute to the NAD(+) site; these read LGI and IY.

Belongs to the zinc-containing alcohol dehydrogenase family. In terms of assembly, homotetramer. Requires Zn(2+) as cofactor.

It localises to the cytoplasm. It catalyses the reaction L-threonine + NAD(+) = (2S)-2-amino-3-oxobutanoate + NADH + H(+). It participates in amino-acid degradation; L-threonine degradation via oxydo-reductase pathway; glycine from L-threonine: step 1/2. Functionally, catalyzes the NAD(+)-dependent oxidation of L-threonine to 2-amino-3-ketobutyrate. The protein is L-threonine 3-dehydrogenase of Mesorhizobium japonicum (strain LMG 29417 / CECT 9101 / MAFF 303099) (Mesorhizobium loti (strain MAFF 303099)).